The sequence spans 201 residues: 3-isopropylmalate dehydratase small subunit (201 aa).

Belongs to the LeuD family. LeuD type 1 subfamily. Heterodimer of LeuC and LeuD.

It carries out the reaction (2R,3S)-3-isopropylmalate = (2S)-2-isopropylmalate. It functions in the pathway amino-acid biosynthesis; L-leucine biosynthesis; L-leucine from 3-methyl-2-oxobutanoate: step 2/4. In terms of biological role, catalyzes the isomerization between 2-isopropylmalate and 3-isopropylmalate, via the formation of 2-isopropylmaleate. This is 3-isopropylmalate dehydratase small subunit from Chloroflexus aurantiacus (strain ATCC 29366 / DSM 635 / J-10-fl).